The primary structure comprises 379 residues: Succinyl-diaminopimelate desuccinylase (379 aa).

Residue H68 coordinates Zn(2+). D70 is a catalytic residue. Zn(2+) is bound at residue D101. E134 functions as the Proton acceptor in the catalytic mechanism. The Zn(2+) site is built by E135, E163, and H352.

It belongs to the peptidase M20A family. DapE subfamily. Homodimer. The cofactor is Zn(2+). Co(2+) serves as cofactor.

It carries out the reaction N-succinyl-(2S,6S)-2,6-diaminopimelate + H2O = (2S,6S)-2,6-diaminopimelate + succinate. Its pathway is amino-acid biosynthesis; L-lysine biosynthesis via DAP pathway; LL-2,6-diaminopimelate from (S)-tetrahydrodipicolinate (succinylase route): step 3/3. Functionally, catalyzes the hydrolysis of N-succinyl-L,L-diaminopimelic acid (SDAP), forming succinate and LL-2,6-diaminopimelate (DAP), an intermediate involved in the bacterial biosynthesis of lysine and meso-diaminopimelic acid, an essential component of bacterial cell walls. This chain is Succinyl-diaminopimelate desuccinylase, found in Dinoroseobacter shibae (strain DSM 16493 / NCIMB 14021 / DFL 12).